Here is a 335-residue protein sequence, read N- to C-terminus: Probable cytosolic iron-sulfur protein assembly protein Ciao1 (335 aa).

7 WD repeats span residues 12–51 (GHKGRIWGVAWHPKGNVFASCGEDKAIRIWSLTGNTWGTK), 57–96 (GHKRTIREIRWSPCGQYLASASFDATTAIWSKSSGEFECN), 101–140 (GHENEVKSVSWSRSGGLLATCSRDKSVWIWEVAGDDEFEC), 146–185 (PHTQDVKRVVWHPTKDVLASASYDNTIKMFAEEPIDNDWD), 192–231 (SHTSTVWGIDFDADGERLVSCSDDTTIKIWRAYHPGNTAG), 250–289 (QHSRAIYDVSWCKLTGLIATACGDDGIRIFKETSDSKPDE), and 301–335 (AHDQDVNSVQWNPVVAGQLISCSDDGTIKIWKVSE).

The protein belongs to the WD repeat CIA1 family.

Its function is as follows. Essential component of the cytosolic iron-sulfur (Fe/S) protein assembly machinery. Required for the maturation of extramitochondrial Fe/S proteins. The polypeptide is Probable cytosolic iron-sulfur protein assembly protein Ciao1 (Drosophila sechellia (Fruit fly)).